The following is a 302-amino-acid chain: Large ribosomal subunit protein uL29m (302 aa).

Residues 1-38 (MASSGAARPAASRVLQRCQPFSSSTSCAAPVTTWRTLA) constitute a mitochondrion transit peptide. The disordered stretch occupies residues 255 to 302 (EPVADHLETPETSGQEKVGELSPAGAVDPSTILASKTGKPVTDAPRSS).

The protein belongs to the universal ribosomal protein uL29 family. Component of the mitochondrial large ribosomal subunit. Mature mitochondrial ribosomes consist of a small (37S) and a large (54S) subunit. The 37S subunit contains at least 33 different proteins and 1 molecule of RNA (15S). The 54S subunit contains at least 45 different proteins and 1 molecule of RNA (21S).

It is found in the mitochondrion. The sequence is that of Large ribosomal subunit protein uL29m (MRPL4) from Pyricularia oryzae (strain 70-15 / ATCC MYA-4617 / FGSC 8958) (Rice blast fungus).